A 238-amino-acid polypeptide reads, in one-letter code: Ribonuclease PH (238 aa).

Residues Arg-86 and 124–126 (GTR) each bind phosphate.

Belongs to the RNase PH family. In terms of assembly, homohexameric ring arranged as a trimer of dimers.

The enzyme catalyses tRNA(n+1) + phosphate = tRNA(n) + a ribonucleoside 5'-diphosphate. Phosphorolytic 3'-5' exoribonuclease that plays an important role in tRNA 3'-end maturation. Removes nucleotide residues following the 3'-CCA terminus of tRNAs; can also add nucleotides to the ends of RNA molecules by using nucleoside diphosphates as substrates, but this may not be physiologically important. Probably plays a role in initiation of 16S rRNA degradation (leading to ribosome degradation) during starvation. The polypeptide is Ribonuclease PH (Pectobacterium atrosepticum (strain SCRI 1043 / ATCC BAA-672) (Erwinia carotovora subsp. atroseptica)).